Reading from the N-terminus, the 653-residue chain is Choline transporter-like protein 1 (653 aa).

Gly-2 is lipidated: N-myristoyl glycine. Over 2–29 (GCCSSASAAQSSKREWKPLEDRSCTDIP) the chain is Cytoplasmic. A helical transmembrane segment spans residues 30-50 (WLLLFVLFCIGMGFICGFSVA). Residues 51–211 (TGAAARLVSG…RLISGVMTSK (161 aa)) are Mitochondrial intermembrane-facing. A helical transmembrane segment spans residues 212-232 (EIILGLCLLSLVLSMILMVII). Residues 233 to 237 (RYISR) are Cytoplasmic-facing. A helical transmembrane segment spans residues 238–258 (VLVWILTVLVILGSLGGTGVL). At 259-287 (WWLYAKQRRSPKEAVIPEQLQIAEDNLRA) the chain is on the mitochondrial intermembrane side. Residues 288 to 308 (LLIYAISATVFTVILFLIMLV) traverse the membrane as a helical segment. The Cytoplasmic portion of the chain corresponds to 309–314 (MRKRVA). The helical transmembrane segment at 315–335 (LTIALFHVAGKVFIHLPLLVF) threads the bilayer. Over 336-337 (QP) the chain is Mitochondrial intermembrane. The chain crosses the membrane as a helical span at residues 338 to 358 (FWTFFALVLFWAYWIMTLLFL). The Cytoplasmic portion of the chain corresponds to 359–379 (GTTGSAVQNEQGFVEYKISGP). A helical membrane pass occupies residues 380–400 (LQYMWWYHVVGLIWISEFILA). Residues 401–536 (CQQMTVAGAV…RVAAINTVGD (136 aa)) are Mitochondrial intermembrane-facing. The chain crosses the membrane as a helical span at residues 537–557 (FMLFLGKVLIVCSTGLAGIML). Topologically, residues 558-565 (LNYQQDYT) are cytoplasmic. Residues 566–586 (VWVLPLIIVCLFAFLVAHCFL) traverse the membrane as a helical segment. The Mitochondrial intermembrane portion of the chain corresponds to 587 to 653 (SIYEMVVDVL…RELKPMLRKR (67 aa)).

This sequence belongs to the CTL (choline transporter-like) family. In terms of tissue distribution, specifically abundant in skeletal muscle (at protein level).

It localises to the cell membrane. It is found in the mitochondrion outer membrane. It carries out the reaction choline(out) + n H(+)(in) = choline(in) + n H(+)(out). The enzyme catalyses ethanolamine(out) + n H(+)(in) = ethanolamine(in) + n H(+)(out). Functionally, choline/H+ antiporter. Also acts as a high-affinity ethanolamine/H+ antiporter, regulating the supply of extracellular ethanolamine (Etn) for the CDP-Etn pathway, redistribute intracellular Etn and balance the CDP-Cho and CDP-Etn arms of the Kennedy pathway. Involved in membrane synthesis and myelin production. This Mus musculus (Mouse) protein is Choline transporter-like protein 1 (Slc44a1).